Consider the following 165-residue polypeptide: Cyanate hydratase (165 aa).

Residues 1-20 (MAQNKANTVSQLQSLKNKSG) form a disordered region. Catalysis depends on residues arginine 90, glutamate 93, and serine 116.

It belongs to the cyanase family.

It carries out the reaction cyanate + hydrogencarbonate + 3 H(+) = NH4(+) + 2 CO2. Functionally, catalyzes the reaction of cyanate with bicarbonate to produce ammonia and carbon dioxide. This chain is Cyanate hydratase, found in Medicago truncatula (Barrel medic).